The chain runs to 123 residues: Large ribosomal subunit protein uL24 (123 aa).

This sequence belongs to the universal ribosomal protein uL24 family. In terms of assembly, part of the 50S ribosomal subunit.

In terms of biological role, one of two assembly initiator proteins, it binds directly to the 5'-end of the 23S rRNA, where it nucleates assembly of the 50S subunit. Functionally, one of the proteins that surrounds the polypeptide exit tunnel on the outside of the subunit. This is Large ribosomal subunit protein uL24 from Solibacter usitatus (strain Ellin6076).